Here is a 214-residue protein sequence, read N- to C-terminus: Probable transaldolase (214 aa).

Lys83 (schiff-base intermediate with substrate) is an active-site residue.

The protein belongs to the transaldolase family. Type 3B subfamily.

Its subcellular location is the cytoplasm. It catalyses the reaction D-sedoheptulose 7-phosphate + D-glyceraldehyde 3-phosphate = D-erythrose 4-phosphate + beta-D-fructose 6-phosphate. Its pathway is carbohydrate degradation; pentose phosphate pathway; D-glyceraldehyde 3-phosphate and beta-D-fructose 6-phosphate from D-ribose 5-phosphate and D-xylulose 5-phosphate (non-oxidative stage): step 2/3. Its function is as follows. Transaldolase is important for the balance of metabolites in the pentose-phosphate pathway. In Clostridium tetani (strain Massachusetts / E88), this protein is Probable transaldolase.